The sequence spans 200 residues: Large ribosomal subunit protein uL4 (200 aa).

The tract at residues 38 to 68 is disordered; the sequence is GRQGSKQQKTRSDVRGGGKRPWRQKGTGRAR. Residues 54–65 are compositionally biased toward basic residues; that stretch reads GGKRPWRQKGTG.

It belongs to the universal ribosomal protein uL4 family. As to quaternary structure, part of the 50S ribosomal subunit.

One of the primary rRNA binding proteins, this protein initially binds near the 5'-end of the 23S rRNA. It is important during the early stages of 50S assembly. It makes multiple contacts with different domains of the 23S rRNA in the assembled 50S subunit and ribosome. In terms of biological role, forms part of the polypeptide exit tunnel. The polypeptide is Large ribosomal subunit protein uL4 (Pseudomonas fluorescens (strain SBW25)).